Consider the following 911-residue polypeptide: Valine--tRNA ligase (911 aa).

The 'HIGH' region motif lies at 53 to 63 (PNVTGTLHLGH). A 'KMSKS' region motif is present at residues 533–537 (KMSKS). Position 536 (Lys-536) interacts with ATP. Positions 845–910 (KEIERLTKEL…NRLAMLRSMQ (66 aa)) form a coiled coil.

The protein belongs to the class-I aminoacyl-tRNA synthetase family. ValS type 1 subfamily. Monomer.

Its subcellular location is the cytoplasm. It catalyses the reaction tRNA(Val) + L-valine + ATP = L-valyl-tRNA(Val) + AMP + diphosphate. Catalyzes the attachment of valine to tRNA(Val). As ValRS can inadvertently accommodate and process structurally similar amino acids such as threonine, to avoid such errors, it has a 'posttransfer' editing activity that hydrolyzes mischarged Thr-tRNA(Val) in a tRNA-dependent manner. This is Valine--tRNA ligase from Symbiobacterium thermophilum (strain DSM 24528 / JCM 14929 / IAM 14863 / T).